We begin with the raw amino-acid sequence, 515 residues long: Tripartite motif-containing protein 5 (515 aa).

Ala2 bears the N-acetylalanine mark. The RING-type zinc finger occupies 15-60 (CPICLELLTEPLSLPCGHSLCQACITANHKESMLYKEEERSCPVCR). A Phosphoserine modification is found at Ser87. A B box-type zinc finger spans residues 92–133 (QKVDHCARHGEKLLLFCQEDSKVICWLCERSQEHRGHHTFLM). Zn(2+) is bound by residues Cys97, His100, Cys119, and His125. Residues 137 to 225 (AQEYHVKLQT…LTKSETEMVQ (89 aa)) adopt a coiled-coil conformation. A required for interaction with GABARAP and for autophagy region spans residues 187-200 (FEQLREILDWEESN). Residues 283–515 (LKGMLDMFRE…VPMTLCSPSS (233 aa)) enclose the B30.2/SPRY domain.

Belongs to the TRIM/RBCC family. As to quaternary structure, can form homodimers and homotrimers. In addition to lower-order dimerization, also exhibits a higher-order multimerization and both low- and high-order multimerizations are essential for its restriction activity. Interacts with BTBD1 and BTBD2. Interacts with PSMC4, PSMC5, PSMD7 and HSPA8/HSC70. Interacts (via B30.2/SPRY domain) with HSPA1A/B. Interacts with PSMC2, MAP3K7/TAK1, TAB2 and TAB3. Interacts with SQSTM1. Interacts with TRIM6 and TRIM34. Interacts with ULK1 (phosphorylated form), GABARAP, GABARAPL1, GABARAPL2, MAP1LC3A, MAP1LC3C and BECN1. Post-translationally, degraded in a proteasome-independent fashion in the absence of viral infection but in a proteasome-dependent fashion following exposure to restriction sensitive virus. In terms of processing, autoubiquitinated in a RING finger- and UBE2D2-dependent manner. Monoubiquitinated by TRIM21. Deubiquitinated by Yersinia YopJ. Ubiquitination may not lead to proteasomal degradation.

The protein resides in the cytoplasm. The protein localises to the nucleus. It carries out the reaction S-ubiquitinyl-[E2 ubiquitin-conjugating enzyme]-L-cysteine + [acceptor protein]-L-lysine = [E2 ubiquitin-conjugating enzyme]-L-cysteine + N(6)-ubiquitinyl-[acceptor protein]-L-lysine.. The protein operates within protein modification; protein ubiquitination. In terms of biological role, capsid-specific restriction factor that prevents infection from non-host-adapted retroviruses. Blocks viral replication early in the life cycle, after viral entry but before reverse transcription. In addition to acting as a capsid-specific restriction factor, also acts as a pattern recognition receptor that activates innate immune signaling in response to the retroviral capsid lattice. Binding to the viral capsid triggers its E3 ubiquitin ligase activity, and in concert with the heterodimeric ubiquitin conjugating enzyme complex UBE2V1-UBE2N (also known as UBC13-UEV1A complex) generates 'Lys-63'-linked polyubiquitin chains, which in turn are catalysts in the autophosphorylation of the MAP3K7/TAK1 complex (includes TAK1, TAB2, and TAB3). Activation of the MAP3K7/TAK1 complex by autophosphorylation results in the induction and expression of NF-kappa-B and MAPK-responsive inflammatory genes, thereby leading to an innate immune response in the infected cell. Restricts infection by human immunodeficiency virus type 1 (HIV-1) and N-tropic murine leukemia virus (N-MLV). Plays a role in regulating autophagy through activation of autophagy regulator BECN1 by causing its dissociation from its inhibitors BCL2 and TAB2. The sequence is that of Tripartite motif-containing protein 5 (TRIM5) from Chlorocebus pygerythrus (Vervet monkey).